The sequence spans 675 residues: DNA ligase (675 aa).

NAD(+) is bound by residues 34–38 (DAEYD), 83–84 (SL), and E116. K118 (N6-AMP-lysine intermediate) is an active-site residue. Positions 139, 176, 293, and 317 each coordinate NAD(+). C411, C414, C429, and C435 together coordinate Zn(2+). The BRCT domain occupies 594 to 675 (AGENPFKGKT…FLAIVNAYKR (82 aa)).

Belongs to the NAD-dependent DNA ligase family. LigA subfamily. Mg(2+) serves as cofactor. The cofactor is Mn(2+).

The enzyme catalyses NAD(+) + (deoxyribonucleotide)n-3'-hydroxyl + 5'-phospho-(deoxyribonucleotide)m = (deoxyribonucleotide)n+m + AMP + beta-nicotinamide D-nucleotide.. Its function is as follows. DNA ligase that catalyzes the formation of phosphodiester linkages between 5'-phosphoryl and 3'-hydroxyl groups in double-stranded DNA using NAD as a coenzyme and as the energy source for the reaction. It is essential for DNA replication and repair of damaged DNA. The sequence is that of DNA ligase from Mannheimia succiniciproducens (strain KCTC 0769BP / MBEL55E).